The following is a 611-amino-acid chain: 4-hydroxy-3-methylbut-2-en-1-yl diphosphate synthase (flavodoxin) (611 aa).

4 residues coordinate [4Fe-4S] cluster: cysteine 520, cysteine 523, cysteine 554, and glutamate 561.

Belongs to the IspG family. [4Fe-4S] cluster is required as a cofactor.

It carries out the reaction (2E)-4-hydroxy-3-methylbut-2-enyl diphosphate + oxidized [flavodoxin] + H2O + 2 H(+) = 2-C-methyl-D-erythritol 2,4-cyclic diphosphate + reduced [flavodoxin]. It functions in the pathway isoprenoid biosynthesis; isopentenyl diphosphate biosynthesis via DXP pathway; isopentenyl diphosphate from 1-deoxy-D-xylulose 5-phosphate: step 5/6. Its function is as follows. Converts 2C-methyl-D-erythritol 2,4-cyclodiphosphate (ME-2,4cPP) into 1-hydroxy-2-methyl-2-(E)-butenyl 4-diphosphate. This is 4-hydroxy-3-methylbut-2-en-1-yl diphosphate synthase (flavodoxin) from Parabacteroides distasonis (strain ATCC 8503 / DSM 20701 / CIP 104284 / JCM 5825 / NCTC 11152).